The chain runs to 458 residues: (R)-6-hydroxynicotine oxidase (458 aa).

An FAD-binding PCMH-type domain is found at R33–L204. Residues R67–P73, H129–P130, F134–L137, G144, T195, N413, and N450 each bind FAD. A Pros-8alpha-FAD histidine modification is found at H71.

The protein belongs to the oxygen-dependent FAD-linked oxidoreductase family. Monomer. FAD serves as cofactor.

The protein resides in the cytoplasm. It catalyses the reaction (R)-6-hydroxynicotine + O2 + H2O = 6-hydroxypseudooxynicotine + H2O2. The catalysed reaction is (R)-6-hydroxynicotine + O2 = 6-hydroxy-N-methylmyosmine + H2O2. It participates in alkaloid degradation; nicotine degradation; 6-hydroxypseudooxynicotine from nicotine (R-isomer route): step 2/2. With respect to regulation, inhibited by (S)-6-hydroxynicotine. Inhibited by high concentrations of phenanthroline. Functionally, involved in the degradation of D-nicotine. Catalyzes the oxidation of (R)-6-hydroxynicotine (6-hydroxy-D-nicotine) to 6-hydroxypseudooxynicotine. Oxidation of the pyrrolidine ring of (R)-6-hydroxynicotine leads to the formation of the optically inactive 6-hydroxy-N-methylmyosmine, which hydrolyzes spontaneously to 6-hydroxypseudooxynicotine. Acts with absolute stereospecificity on the D-form of 6-hydroxynicotine. Shows lower activity with (R)-6-hydroxynornicotine, and weak activity with (R)-4-(1-methylpyrrolidine-2-yl)phenol, (R)-6-chloronicotine and (R)-nicotine. The polypeptide is (R)-6-hydroxynicotine oxidase (Paenarthrobacter nicotinovorans (Arthrobacter nicotinovorans)).